We begin with the raw amino-acid sequence, 67 residues long: Protein AaeX (67 aa).

A run of 2 helical transmembrane segments spans residues 3 to 23 (VLPV…ELII) and 43 to 63 (LVWH…YLVS).

This sequence belongs to the AaeX family.

It is found in the cell membrane. The chain is Protein AaeX from Pantoea vagans (strain C9-1) (Pantoea agglomerans (strain C9-1)).